A 640-amino-acid polypeptide reads, in one-letter code: Scarecrow-like protein 27 (640 aa).

2 stretches are compositionally biased toward low complexity: residues 68–79 (SYSSTTTTLSSS) and 86–98 (TVTN…GDDN). The interval 68–98 (SYSSTTTTLSSSHGGGGTTVTNTTVTAGDDN) is disordered. Residues 259-639 (GMAGDDQSVI…KELVTVSAWK (381 aa)) enclose the GRAS domain. Residues 266 to 331 (SVIIEQLFNA…AEALLSLIHN (66 aa)) are leucine repeat I (LRI). The VHIID stretch occupies residues 350–422 (YRSFSETSPF…NRASSLKLTV (73 aa)). A VHIID motif is present at residues 383-387 (IHIID). A leucine repeat II (LRII) region spans residues 438 to 470 (FTEENLKTFAGEVKIPFEIELLSVELLLNPAYW). The interval 480–565 (EAIAVNLPVN…RFWVQPSIEK (86 aa)) is PFYRE. The tract at residues 568 to 639 (MKRHRWIERS…KELVTVSAWK (72 aa)) is SAW.

It belongs to the GRAS family. Expressed in seedlings, roots, cotyledons, leaves and flowers.

The protein localises to the nucleus. Its function is as follows. Probable transcription factor involved in plant development. This is Scarecrow-like protein 27 (SCL27) from Arabidopsis thaliana (Mouse-ear cress).